Reading from the N-terminus, the 343-residue chain is Heat-inducible transcription repressor HrcA (343 aa).

This sequence belongs to the HrcA family.

Negative regulator of class I heat shock genes (grpE-dnaK-dnaJ and groELS operons). Prevents heat-shock induction of these operons. In Mycolicibacterium smegmatis (strain ATCC 700084 / mc(2)155) (Mycobacterium smegmatis), this protein is Heat-inducible transcription repressor HrcA.